Reading from the N-terminus, the 104-residue chain is Large ribosomal subunit protein uL24 (104 aa).

The protein belongs to the universal ribosomal protein uL24 family. In terms of assembly, part of the 50S ribosomal subunit.

Functionally, one of two assembly initiator proteins, it binds directly to the 5'-end of the 23S rRNA, where it nucleates assembly of the 50S subunit. One of the proteins that surrounds the polypeptide exit tunnel on the outside of the subunit. The polypeptide is Large ribosomal subunit protein uL24 (Caulobacter vibrioides (strain ATCC 19089 / CIP 103742 / CB 15) (Caulobacter crescentus)).